The following is a 331-amino-acid chain: Ornithine carbamoyltransferase (331 aa).

Residues 55–58, Gln-82, Arg-106, and 133–136 each bind carbamoyl phosphate; these read STRT and HPTQ. Residues Asn-166, Asp-230, and 234-235 each bind L-ornithine; that span reads SM. Residues 272 to 273 and Arg-317 each bind carbamoyl phosphate; that span reads CL.

Belongs to the aspartate/ornithine carbamoyltransferase superfamily. OTCase family.

It is found in the cytoplasm. The catalysed reaction is carbamoyl phosphate + L-ornithine = L-citrulline + phosphate + H(+). It functions in the pathway amino-acid biosynthesis; L-arginine biosynthesis; L-arginine from L-ornithine and carbamoyl phosphate: step 1/3. In terms of biological role, reversibly catalyzes the transfer of the carbamoyl group from carbamoyl phosphate (CP) to the N(epsilon) atom of ornithine (ORN) to produce L-citrulline. The polypeptide is Ornithine carbamoyltransferase (Neisseria meningitidis serogroup C / serotype 2a (strain ATCC 700532 / DSM 15464 / FAM18)).